A 551-amino-acid polypeptide reads, in one-letter code: FGGY carbohydrate kinase domain-containing protein (551 aa).

Belongs to the FGGY kinase family. Expressed in kidney, lung and small intestine and to a lower extent in liver and detected in cerebrospinal fluid (at protein level).

The catalysed reaction is D-ribulose + ATP = D-ribulose 5-phosphate + ADP + H(+). It participates in carbohydrate metabolism; pentose and glucuronate interconversion. Functionally, catalyzes ATP-dependent phosphorylation of D-ribulose at C-5 to form D-ribulose 5-phosphate. Postulated to function in a metabolite repair mechanism by preventing toxic accumulation of free D-ribulose formed by non-specific phosphatase activities. Alternatively, may play a role in regulating D-ribulose 5-phosphate recycling in the pentose phosphate pathway. Can phosphorylate ribitol with low efficiency. The protein is FGGY carbohydrate kinase domain-containing protein of Homo sapiens (Human).